Here is a 511-residue protein sequence, read N- to C-terminus: Cytochrome P450 26B1 (511 aa).

Residue Cys-440 coordinates heme.

It belongs to the cytochrome P450 family. It depends on heme as a cofactor.

It localises to the endoplasmic reticulum membrane. The protein localises to the microsome membrane. It catalyses the reaction all-trans-retinoate + reduced [NADPH--hemoprotein reductase] + O2 = all-trans-4-hydroxyretinoate + oxidized [NADPH--hemoprotein reductase] + H2O + H(+). The enzyme catalyses all-trans-retinoate + reduced [NADPH--hemoprotein reductase] + O2 = all-trans-18-hydroxyretinoate + oxidized [NADPH--hemoprotein reductase] + H2O + H(+). Its function is as follows. A cytochrome P450 monooxygenase involved in the metabolism of retinoates (RAs), the active metabolites of vitamin A, and critical signaling molecules in animals. RAs exist as at least four different isomers: all-trans-RA (atRA), 9-cis-RA, 13-cis-RA, and 9,13-dicis-RA, where atRA is considered to be the biologically active isomer, although 9-cis-RA and 13-cis-RA also have activity. Catalyzes the hydroxylation of atRA primarily at C-4 and C-18, thereby contributing to the regulation of atRA homeostasis and signaling. Hydroxylation of atRA limits its biological activity and initiates a degradative process leading to its eventual elimination. Involved in the convertion of atRA to all-trans-4-oxo-RA. Can oxidize all-trans-13,14-dihydroretinoate (DRA) to metabolites which could include all-trans-4-oxo-DRA, all-trans-4-hydroxy-DRA, all-trans-5,8-epoxy-DRA, and all-trans-18-hydroxy-DRA. Plays a role in skeletal development, both at the level of patterning and in the ossification of bone and the establishment of some synovial joints. This Danio rerio (Zebrafish) protein is Cytochrome P450 26B1.